Consider the following 120-residue polypeptide: MFLLYEYDIFWAFLIISSLIPILAFFVSGVLAPINKGPEKLSSYESGIEPMGNAWLQFRIRYYMFALVFVVFDVETVFLYPWAMSFDVLGISVFVEALIFVLILIVGLVYAWRKGALEWS.

3 helical membrane passes run 9 to 29, 64 to 84, and 88 to 108; these read IFWA…FVSG, MFAL…PWAM, and VLGI…IVGL.

This sequence belongs to the complex I subunit 3 family. NDH is composed of at least 16 different subunits, 5 of which are encoded in the nucleus.

It localises to the plastid. It is found in the chloroplast thylakoid membrane. The enzyme catalyses a plastoquinone + NADH + (n+1) H(+)(in) = a plastoquinol + NAD(+) + n H(+)(out). It catalyses the reaction a plastoquinone + NADPH + (n+1) H(+)(in) = a plastoquinol + NADP(+) + n H(+)(out). Its function is as follows. NDH shuttles electrons from NAD(P)H:plastoquinone, via FMN and iron-sulfur (Fe-S) centers, to quinones in the photosynthetic chain and possibly in a chloroplast respiratory chain. The immediate electron acceptor for the enzyme in this species is believed to be plastoquinone. Couples the redox reaction to proton translocation, and thus conserves the redox energy in a proton gradient. The polypeptide is NAD(P)H-quinone oxidoreductase subunit 3, chloroplastic (Daucus carota (Wild carrot)).